The chain runs to 309 residues: Extracellular agarase (309 aa).

Residues M1–A30 constitute a signal peptide (tat-type signal). In terms of domain architecture, GH16 spans L33–V309. Residue E155 is the Nucleophile of the active site. The Proton donor role is filled by E160.

Belongs to the glycosyl hydrolase 16 family. Predicted to be exported by the Tat system. The position of the signal peptide cleavage has been experimentally proven.

The protein localises to the secreted. The enzyme catalyses Hydrolysis of (1-&gt;4)-beta-D-galactosidic linkages in agarose, giving the tetramer as the predominant product.. The sequence is that of Extracellular agarase (dagA) from Streptomyces coelicolor (strain ATCC BAA-471 / A3(2) / M145).